Here is a 343-residue protein sequence, read N- to C-terminus: Anthranilate phosphoribosyltransferase (343 aa).

5-phospho-alpha-D-ribose 1-diphosphate contacts are provided by residues G84, 87–88 (GD), T92, 94–97 (NIST), 112–120 (KHGNRGVSS), and S124. G84 is a binding site for anthranilate. S96 is a binding site for Mg(2+). N115 contacts anthranilate. R170 contacts anthranilate. Positions 229 and 230 each coordinate Mg(2+).

It belongs to the anthranilate phosphoribosyltransferase family. Homodimer. Requires Mg(2+) as cofactor.

It carries out the reaction N-(5-phospho-beta-D-ribosyl)anthranilate + diphosphate = 5-phospho-alpha-D-ribose 1-diphosphate + anthranilate. The protein operates within amino-acid biosynthesis; L-tryptophan biosynthesis; L-tryptophan from chorismate: step 2/5. Catalyzes the transfer of the phosphoribosyl group of 5-phosphorylribose-1-pyrophosphate (PRPP) to anthranilate to yield N-(5'-phosphoribosyl)-anthranilate (PRA). The protein is Anthranilate phosphoribosyltransferase of Burkholderia pseudomallei (strain 1106a).